A 422-amino-acid polypeptide reads, in one-letter code: ATP phosphoribosyltransferase regulatory subunit (422 aa).

It belongs to the class-II aminoacyl-tRNA synthetase family. HisZ subfamily. As to quaternary structure, heteromultimer composed of HisG and HisZ subunits.

The protein resides in the cytoplasm. The protein operates within amino-acid biosynthesis; L-histidine biosynthesis; L-histidine from 5-phospho-alpha-D-ribose 1-diphosphate: step 1/9. Its function is as follows. Required for the first step of histidine biosynthesis. May allow the feedback regulation of ATP phosphoribosyltransferase activity by histidine. In Clostridium botulinum (strain 657 / Type Ba4), this protein is ATP phosphoribosyltransferase regulatory subunit.